We begin with the raw amino-acid sequence, 1355 residues long: Transcription factor MAR1 (1355 aa).

A DNA-binding region (zn(2)-C6 fungal-type) is located at residues 23–52; it reads CTICRKRKVKCDKTRPHCNQCTKTGVAHLC. Disordered stretches follow at residues 586–614, 918–942, and 1221–1253; these read TTDN…KDTN, SVPS…LNQD, and PPIS…TSSL. The segment covering 589 to 603 has biased composition (low complexity); it reads NTRSGPPSNSNRNGS. The segment covering 604-614 has biased composition (polar residues); it reads ETPSVSPKDTN. A compositionally biased stretch (low complexity) spans 918–927; the sequence is SVPSSCNSSS. The segment covering 1225 to 1238 has biased composition (polar residues); sequence SAKNNMAWGTTPES.

It localises to the nucleus. Its function is as follows. Transcription factor that contributes to plasma membrane sphingolipid incorporation and membrane permeability, decreasing fluconazole accumulation. Regulates 337 genes under fluconazole stress, including several related to lipid biosynthesis pathways such as RSB1, encoding a sphingoid long-chain base efflux transporter. Associates with the promoter of RSB1 in the region containing two 5'-CCCCTCC-3' motifs and increases its promoter occupancy upon fluconazole stress. This is Transcription factor MAR1 from Candida glabrata (strain ATCC 2001 / BCRC 20586 / JCM 3761 / NBRC 0622 / NRRL Y-65 / CBS 138) (Yeast).